Reading from the N-terminus, the 539-residue chain is O-phosphoserine--tRNA(Cys) ligase (539 aa).

Substrate is bound by residues 188–190 (HMT), 233–235 (SAS), 275–276 (YY), and Asn-327.

This sequence belongs to the class-II aminoacyl-tRNA synthetase family. O-phosphoseryl-tRNA(Cys) synthetase subfamily. Homotetramer. Interacts with SepCysS.

The enzyme catalyses tRNA(Cys) + O-phospho-L-serine + ATP = O-phospho-L-seryl-tRNA(Cys) + AMP + diphosphate. Catalyzes the attachment of O-phosphoserine (Sep) to tRNA(Cys). The sequence is that of O-phosphoserine--tRNA(Cys) ligase from Methanosarcina acetivorans (strain ATCC 35395 / DSM 2834 / JCM 12185 / C2A).